The primary structure comprises 273 residues: 3-methyl-2-oxobutanoate hydroxymethyltransferase 3 (273 aa).

Residues Asp-49 and Asp-88 each contribute to the Mg(2+) site. 3-methyl-2-oxobutanoate is bound by residues 49–50 (DS), Asp-88, and Lys-118. Glu-120 is a binding site for Mg(2+). The Proton acceptor role is filled by Glu-187.

This sequence belongs to the PanB family. In terms of assembly, homodecamer; pentamer of dimers. Mg(2+) serves as cofactor.

The protein resides in the cytoplasm. It catalyses the reaction 3-methyl-2-oxobutanoate + (6R)-5,10-methylene-5,6,7,8-tetrahydrofolate + H2O = 2-dehydropantoate + (6S)-5,6,7,8-tetrahydrofolate. Its pathway is cofactor biosynthesis; (R)-pantothenate biosynthesis; (R)-pantoate from 3-methyl-2-oxobutanoate: step 1/2. In terms of biological role, catalyzes the reversible reaction in which hydroxymethyl group from 5,10-methylenetetrahydrofolate is transferred onto alpha-ketoisovalerate to form ketopantoate. The polypeptide is 3-methyl-2-oxobutanoate hydroxymethyltransferase 3 (Bradyrhizobium diazoefficiens (strain JCM 10833 / BCRC 13528 / IAM 13628 / NBRC 14792 / USDA 110)).